A 355-amino-acid polypeptide reads, in one-letter code: UDP-N-acetylglucosamine--N-acetylmuramyl-(pentapeptide) pyrophosphoryl-undecaprenol N-acetylglucosamine transferase (355 aa).

Residues 13 to 15, asparagine 125, arginine 162, serine 190, isoleucine 244, and glutamine 289 contribute to the UDP-N-acetyl-alpha-D-glucosamine site; that span reads TGG.

The protein belongs to the glycosyltransferase 28 family. MurG subfamily.

Its subcellular location is the cell inner membrane. The catalysed reaction is di-trans,octa-cis-undecaprenyl diphospho-N-acetyl-alpha-D-muramoyl-L-alanyl-D-glutamyl-meso-2,6-diaminopimeloyl-D-alanyl-D-alanine + UDP-N-acetyl-alpha-D-glucosamine = di-trans,octa-cis-undecaprenyl diphospho-[N-acetyl-alpha-D-glucosaminyl-(1-&gt;4)]-N-acetyl-alpha-D-muramoyl-L-alanyl-D-glutamyl-meso-2,6-diaminopimeloyl-D-alanyl-D-alanine + UDP + H(+). Its pathway is cell wall biogenesis; peptidoglycan biosynthesis. Functionally, cell wall formation. Catalyzes the transfer of a GlcNAc subunit on undecaprenyl-pyrophosphoryl-MurNAc-pentapeptide (lipid intermediate I) to form undecaprenyl-pyrophosphoryl-MurNAc-(pentapeptide)GlcNAc (lipid intermediate II). This is UDP-N-acetylglucosamine--N-acetylmuramyl-(pentapeptide) pyrophosphoryl-undecaprenol N-acetylglucosamine transferase from Neisseria gonorrhoeae (strain ATCC 700825 / FA 1090).